The sequence spans 437 residues: MEGVLSSLLASSLIVGFPSLIFVCSILIYYYLCVMKKKISSKDSLPPVIGVYIMRCIYSITQYWEMIIPQIKLYRISNDYIVFQCLSVVFTLKVMDYLKDGPKTIRELSQLTKSSEKNLFRVMRALTQEHIFNYNQSNQTFSLNSCSKLLTSPPPPSSSPFEQNGILSTNDEELGCIFSMLSYPTFIDAWRSLKECIESGVSGFQAKHGMTFFQYIDEKDTYIKKIFDSAMRQSYATKIHTQIINGYDFSKYKKVCDIGGGIGFLGFEIVNHNANTCVCVLELEETVRNGLEQSKVDEKKQRIIEEQRLVFKTGNMFIPRSIPSANLYIMMQVIHDWNNNDAIKILSSVASTMRMERNHTGQSPKLLIIDSILDDNINNDTYKRSCIPDIIMMAIVGGEERTLSQWGHIIKESGLQVLTIKKFNRPPFLSLIELTIQ.

Positions 259, 282, 315, and 316 each coordinate S-adenosyl-L-methionine. His-335 serves as the catalytic Proton acceptor.

This sequence belongs to the class I-like SAM-binding methyltransferase superfamily. Cation-independent O-methyltransferase family. COMT subfamily.

The enzyme catalyses (3,5-dichloro-2,4,6-trihydroxyphenyl)hexan-1-one + S-adenosyl-L-methionine = 1-(3,5-dichloro-2,6-dihydroxy-4-methoxyphenyl)hexan-1-one + S-adenosyl-L-homocysteine + H(+). The chain is O-methyltransferase 10 (omt10) from Dictyostelium discoideum (Social amoeba).